The following is a 431-amino-acid chain: Enolase (431 aa).

Glutamine 167 provides a ligand contact to (2R)-2-phosphoglycerate. Residue glutamate 209 is the Proton donor of the active site. The Mg(2+) site is built by aspartate 246, glutamate 289, and aspartate 316. (2R)-2-phosphoglycerate is bound by residues lysine 341, arginine 370, serine 371, and lysine 392. The active-site Proton acceptor is the lysine 341.

Belongs to the enolase family. In terms of assembly, component of the RNA degradosome, a multiprotein complex involved in RNA processing and mRNA degradation. Requires Mg(2+) as cofactor.

Its subcellular location is the cytoplasm. It localises to the secreted. The protein localises to the cell surface. It carries out the reaction (2R)-2-phosphoglycerate = phosphoenolpyruvate + H2O. Its pathway is carbohydrate degradation; glycolysis; pyruvate from D-glyceraldehyde 3-phosphate: step 4/5. Functionally, catalyzes the reversible conversion of 2-phosphoglycerate (2-PG) into phosphoenolpyruvate (PEP). It is essential for the degradation of carbohydrates via glycolysis. This Shewanella putrefaciens (strain CN-32 / ATCC BAA-453) protein is Enolase.